We begin with the raw amino-acid sequence, 116 residues long: Large ribosomal subunit protein bL17 (116 aa).

Belongs to the bacterial ribosomal protein bL17 family. As to quaternary structure, part of the 50S ribosomal subunit. Contacts protein L32.

This Thermosynechococcus vestitus (strain NIES-2133 / IAM M-273 / BP-1) protein is Large ribosomal subunit protein bL17.